Here is a 382-residue protein sequence, read N- to C-terminus: ORC1-type DNA replication protein 1 (382 aa).

ATP is bound by residues 63-67 (TGKTA), tyrosine 205, and arginine 217.

It belongs to the CDC6/cdc18 family. As to quaternary structure, monomer. Interacts with MCM via the WH domain. In terms of processing, autophosphorylated on a serine. Phosphorylation is stimulated by binding to MCM. Both single-stranded DNA and double-stranded DNA inhibit the phosphorylation reaction.

Its function is as follows. Involved in regulation of DNA replication. May play an essential role in origin recognition. Binds to DNA, with a preference for origin-specific double-stranded sequences. Does not bind single-stranded DNA. Inhibits MCM helicase activity but does not affect its oligomeric state. The chain is ORC1-type DNA replication protein 1 (cdc6-1) from Methanothermobacter thermautotrophicus (strain ATCC 29096 / DSM 1053 / JCM 10044 / NBRC 100330 / Delta H) (Methanobacterium thermoautotrophicum).